The sequence spans 391 residues: MSGPVPSRARVYTDVNTHRPREYWDYESHVVEWGNQDDYQLVRKLGRGKYSEVFEAINITNNEKVVVKILKPVKKKKIKREIKILENLRGGPNIITLADIVKDPVSRTPALVFEHVNNTDFKQLYQTLTDYDIRFYMYEILKALDYCHSMGIMHRDVKPHNVMIDHEHRKLRLIDWGLAEFYHPGQEYNVRVASRYFKGPELLVDYQMYDYSLDMWSLGCMLASMIFRKEPFFHGHDNYDQLVRIAKVLGTEDLYDYIDKYNIELDPRFNDILGRHSRKRWERFVHSENQHLVSPEALDFLDKLLRYDHQSRLTAREAMEHPYFYPIVKDQARMGSSNMPGGSTPVSSASMMSGISSVPTPSPLGPLAGSPVISATTTLGMPVPAAAGAQQ.

Positions 36-41 (QDDYQL) are interaction with beta subunit. In terms of domain architecture, Protein kinase spans 39–324 (YQLVRKLGRG…AREAMEHPYF (286 aa)). ATP-binding positions include 45 to 53 (LGRGKYSEV) and lysine 68. Residue aspartate 156 is the Proton acceptor of the active site. Polar residues predominate over residues 335 to 346 (GSSNMPGGSTPV). Residues 335 to 363 (GSSNMPGGSTPVSSASMMSGISSVPTPSP) form a disordered region. A compositionally biased stretch (low complexity) spans 347 to 357 (SSASMMSGISS).

It belongs to the protein kinase superfamily. Ser/Thr protein kinase family. CK2 subfamily. Tetramer composed of an alpha chain, an alpha' and two beta chains. Interacts with RNPS1.

It localises to the nucleus. It carries out the reaction L-seryl-[protein] + ATP = O-phospho-L-seryl-[protein] + ADP + H(+). It catalyses the reaction L-threonyl-[protein] + ATP = O-phospho-L-threonyl-[protein] + ADP + H(+). Catalytic subunit of a constitutively active serine/threonine-protein kinase complex that phosphorylates a large number of substrates containing acidic residues C-terminal to the phosphorylated serine or threonine. Regulates numerous cellular processes, such as cell cycle progression, apoptosis and transcription, as well as viral infection. May act as a regulatory node which integrates and coordinates numerous signals leading to an appropriate cellular response. During mitosis, functions as a component of the p53/TP53-dependent spindle assembly checkpoint (SAC) that maintains cyclin-B-CDK1 activity and G2 arrest in response to spindle damage. Can also negatively regulate apoptosis. Phosphorylates the caspases CASP9 and CASP2 and the apoptotic regulator NOL3. Phosphorylation protects CASP9 from cleavage and activation by CASP8, and inhibits the dimerization of CASP2 and activation of CASP8. Plays an important role in the circadian clock function by phosphorylating BMAL1. This Gallus gallus (Chicken) protein is Casein kinase II subunit alpha (CSNK2A1).